Reading from the N-terminus, the 308-residue chain is Methionyl-tRNA formyltransferase (308 aa).

110–113 (SLLP) provides a ligand contact to (6S)-5,6,7,8-tetrahydrofolate.

This sequence belongs to the Fmt family.

The enzyme catalyses L-methionyl-tRNA(fMet) + (6R)-10-formyltetrahydrofolate = N-formyl-L-methionyl-tRNA(fMet) + (6S)-5,6,7,8-tetrahydrofolate + H(+). Attaches a formyl group to the free amino group of methionyl-tRNA(fMet). The formyl group appears to play a dual role in the initiator identity of N-formylmethionyl-tRNA by promoting its recognition by IF2 and preventing the misappropriation of this tRNA by the elongation apparatus. This Neisseria meningitidis serogroup B (strain ATCC BAA-335 / MC58) protein is Methionyl-tRNA formyltransferase.